Reading from the N-terminus, the 431-residue chain is Enolase (431 aa).

Gln-163 is a (2R)-2-phosphoglycerate binding site. Glu-205 serves as the catalytic Proton donor. Residues Asp-242, Glu-288, and Asp-315 each coordinate Mg(2+). (2R)-2-phosphoglycerate contacts are provided by Lys-340, Arg-369, Ser-370, and Lys-391. The active-site Proton acceptor is the Lys-340.

Belongs to the enolase family. It depends on Mg(2+) as a cofactor.

Its subcellular location is the cytoplasm. It is found in the secreted. It localises to the cell surface. The catalysed reaction is (2R)-2-phosphoglycerate = phosphoenolpyruvate + H2O. The protein operates within carbohydrate degradation; glycolysis; pyruvate from D-glyceraldehyde 3-phosphate: step 4/5. Functionally, catalyzes the reversible conversion of 2-phosphoglycerate (2-PG) into phosphoenolpyruvate (PEP). It is essential for the degradation of carbohydrates via glycolysis. The sequence is that of Enolase from Acholeplasma laidlawii (strain PG-8A).